The chain runs to 338 residues: Ferredoxin--NADP reductase (338 aa).

The FAD site is built by Asp32, Gln40, Tyr45, Val85, Phe120, Asp287, and Thr327.

This sequence belongs to the ferredoxin--NADP reductase type 2 family. In terms of assembly, homodimer. It depends on FAD as a cofactor.

It carries out the reaction 2 reduced [2Fe-2S]-[ferredoxin] + NADP(+) + H(+) = 2 oxidized [2Fe-2S]-[ferredoxin] + NADPH. The chain is Ferredoxin--NADP reductase from Wolbachia pipientis wMel.